The primary structure comprises 242 residues: MAFAVIRACSRVGRGGLYKRLGGLPRGTRRQRQRRQGASLSTTEQRSLAPRPPTGPPARYPSPAVPARASEARRHPAADLDPPPGEPQAVASRGTPEPRPPPESPGAQPPPGPAAADGAMAAAKPGELMGISSSYQAVMPHFVCLADEFPQPVRPAKLPKGKGRLRRPRQSRFKTQPVTFDEIQEVEEEGVSPMEEEKAKKSFLQSLECLRRSTQSLSLQREPLGSCKLRNSLDSSDSDSAL.

2 disordered regions span residues 16-121 and 152-178; these read GLYK…GAMA and PVRP…TQPV. Pro residues-rich tracts occupy residues 50 to 64 and 97 to 113; these read PRPP…PSPA and EPRP…PPGP. Positions 157-172 are enriched in basic residues; it reads KLPKGKGRLRRPRQSR. A Phosphothreonine modification is found at threonine 175. A phosphoserine mark is found at serine 192, serine 206, serine 216, serine 232, and serine 238. The segment at 215–242 is disordered; that stretch reads QSLSLQREPLGSCKLRNSLDSSDSDSAL. Residues 232–242 show a composition bias toward low complexity; that stretch reads SLDSSDSDSAL.

Its subcellular location is the cytoplasm. This is an uncharacterized protein from Rattus norvegicus (Rat).